Reading from the N-terminus, the 219-residue chain is MSRLAVDSGQVLAEPKSNAEIVFKGRNVEIPDHFRIYVSQKLARLERFDRTIYLFDVELDHERNRRQRKSCQRVEITARGRGPVVRGEACADSFYAALESAVVKLESRLRRGKDRRKVHYGDKTPVSLAEATAVVPAPENGFNTRPAEAHDHDGAVVEREPGRIVRTKEHPAKPMSVDDALYQMELVGHDFFLFYDKDTERPSVVYRRHAYDYGLIRLA.

It belongs to the HPF/YfiA ribosome-associated protein family. Long HPF subfamily. As to quaternary structure, interacts with 100S ribosomes.

The protein resides in the cytoplasm. In terms of biological role, required for dimerization of active 70S ribosomes into 100S ribosomes in stationary phase; 100S ribosomes are translationally inactive and sometimes present during exponential growth. This is Ribosome hibernation promotion factor from Mycobacterium tuberculosis (strain ATCC 25618 / H37Rv).